Here is a 370-residue protein sequence, read N- to C-terminus: Quinolinate synthase (370 aa).

Iminosuccinate-binding residues include His-62 and Ser-83. Cys-128 serves as a coordination point for [4Fe-4S] cluster. Residues 154–156 and Ser-171 each bind iminosuccinate; that span reads YAN. Cys-215 lines the [4Fe-4S] cluster pocket. Iminosuccinate-binding positions include 241–243 and Thr-258; that span reads HPE. Cys-312 is a binding site for [4Fe-4S] cluster.

Belongs to the quinolinate synthase family. Type 1 subfamily. The cofactor is [4Fe-4S] cluster.

Its subcellular location is the cytoplasm. It catalyses the reaction iminosuccinate + dihydroxyacetone phosphate = quinolinate + phosphate + 2 H2O + H(+). It participates in cofactor biosynthesis; NAD(+) biosynthesis; quinolinate from iminoaspartate: step 1/1. In terms of biological role, catalyzes the condensation of iminoaspartate with dihydroxyacetone phosphate to form quinolinate. This is Quinolinate synthase from Neisseria meningitidis serogroup A / serotype 4A (strain DSM 15465 / Z2491).